The sequence spans 141 residues: Regulator of ribonuclease activity B (141 aa).

The span at 119 to 132 (DEDFDDEDDDEDYD) shows a compositional bias: acidic residues. The interval 119–141 (DEDFDDEDDDEDYDKDGFPIERH) is disordered.

This sequence belongs to the RraB family. As to quaternary structure, interacts with the C-terminal region of Rne.

The protein localises to the cytoplasm. Functionally, globally modulates RNA abundance by binding to RNase E (Rne) and regulating its endonucleolytic activity. Can modulate Rne action in a substrate-dependent manner by altering the composition of the degradosome. In Shewanella amazonensis (strain ATCC BAA-1098 / SB2B), this protein is Regulator of ribonuclease activity B.